Here is a 491-residue protein sequence, read N- to C-terminus: Ketol-acid reductoisomerase (NADP(+)) (491 aa).

Residues 15-208 (AQLGKCRFMG…GGHRAGVLES (194 aa)) form the KARI N-terminal Rossmann domain. NADP(+)-binding positions include 45–48 (CGAQ), arginine 68, arginine 76, serine 78, and 108–110 (DKQ). Histidine 132 is an active-site residue. Residue glycine 158 participates in NADP(+) binding. KARI C-terminal knotted domains are found at residues 209 to 344 (SFVA…TAPQ) and 345 to 484 (FEGK…MTDM). Mg(2+) is bound by residues aspartate 217, glutamate 221, glutamate 389, and glutamate 393. Serine 414 is a binding site for substrate.

This sequence belongs to the ketol-acid reductoisomerase family. Mg(2+) is required as a cofactor.

It catalyses the reaction (2R)-2,3-dihydroxy-3-methylbutanoate + NADP(+) = (2S)-2-acetolactate + NADPH + H(+). The catalysed reaction is (2R,3R)-2,3-dihydroxy-3-methylpentanoate + NADP(+) = (S)-2-ethyl-2-hydroxy-3-oxobutanoate + NADPH + H(+). It participates in amino-acid biosynthesis; L-isoleucine biosynthesis; L-isoleucine from 2-oxobutanoate: step 2/4. Its pathway is amino-acid biosynthesis; L-valine biosynthesis; L-valine from pyruvate: step 2/4. Involved in the biosynthesis of branched-chain amino acids (BCAA). Catalyzes an alkyl-migration followed by a ketol-acid reduction of (S)-2-acetolactate (S2AL) to yield (R)-2,3-dihydroxy-isovalerate. In the isomerase reaction, S2AL is rearranged via a Mg-dependent methyl migration to produce 3-hydroxy-3-methyl-2-ketobutyrate (HMKB). In the reductase reaction, this 2-ketoacid undergoes a metal-dependent reduction by NADPH to yield (R)-2,3-dihydroxy-isovalerate. The protein is Ketol-acid reductoisomerase (NADP(+)) of Salmonella heidelberg (strain SL476).